The following is a 55-amino-acid chain: uncharacterized protein (55 aa).

Residues 17-44 (QNVNIALTKKRLDTAQQNADQTLKMIQH) are a coiled coil.

This is an uncharacterized protein from Bacillus subtilis (strain 168).